Consider the following 122-residue polypeptide: Urocortin (122 aa).

The signal sequence occupies residues 1–25; sequence MRQRGRATLLVALLLLVQLRPESSQ. Residues 26–80 constitute a propeptide that is removed on maturation; the sequence is WSPAAAAANVVQDPNLRWNPGVRNQGGGVRALLLLLAERFPRRAGSEPAGERQRR. Valine 120 is modified (valine amide).

This sequence belongs to the sauvagine/corticotropin-releasing factor/urotensin I family. As to quaternary structure, interacts with CRHR1 and CRHR2 (via their N-terminal extracellular domain).

The protein localises to the secreted. Functionally, acts in vitro to stimulate the secretion of adrenocorticotropic hormone (ACTH). Binds with high affinity to CRF receptor types 1, 2-alpha, and 2-beta. Plays a role in the establishment of normal hearing thresholds. Reduces food intake and regulates ghrelin levels in gastric body and plasma. The protein is Urocortin (Ucn) of Rattus norvegicus (Rat).